A 212-amino-acid polypeptide reads, in one-letter code: Protein Thf1 (212 aa).

A coiled-coil region spans residues 179-201 (ERMEQAVELMQETLAADRRKKEK).

Belongs to the THF1 family.

May be involved in photosynthetic membrane biogenesis. The protein is Protein Thf1 of Parasynechococcus marenigrum (strain WH8102).